A 254-amino-acid polypeptide reads, in one-letter code: Methyl-CpG-binding domain-containing protein 11 (254 aa).

The MBD domain maps to 4–74 (EEEVVSVELP…AEFDWTTSGT (71 aa)). The interval 56–254 (KSHPGNPAIA…EKTAEGEATG (199 aa)) is disordered. Composition is skewed to basic and acidic residues over residues 80-97 (RISEKTKATPSPDKEPPK), 107-130 (SKKDAEGEKSEGGGEENSHVKDTE), 151-162 (ETERVNDAKENI), and 178-254 (ESMK…EATG). S116 is subject to Phosphoserine.

Expressed in leaves (around hydathodes), buds, flowers (carpels and pollen grains), stems (around nodes), siliques, mature seeds and roots.

Its subcellular location is the nucleus. In terms of biological role, transcriptional regulator that binds DNA independently of its methylation status. Required during plant organogenesis and development. This chain is Methyl-CpG-binding domain-containing protein 11 (MBD11), found in Arabidopsis thaliana (Mouse-ear cress).